A 553-amino-acid chain; its full sequence is MDEKKLFLTALKKKFEVEDPDEKYTNFYCFGGWEQSARKKEFTEYAKKAAEKRGGIPFYNPDIGVPLGQRKLMAYRVSGTDAYVEGDDLHFVNNAAIQQMVDDIKRTVIVGMDTAHAVLEKRLGVEVTPETINEYMEAINHALPGGAVVQEHMVEVHPGLVEDCYAKIFTGDDNLADELDKRILIDINKEFPEEQAEQLKSYIGNRTYQVNRVPTIVVRTCDGGTVSRWSAMQIGMSFISAYKLCAGEAAIADFSYAAKHADVIEMGTIMPARRARGPNEPGGVAFGTFADIVQASRVSDDPAKISLEVIAGAAALYDQVWLGSYMSGGVGFTQYATAAYTDDILDDFVYYGMEYVDDKYGICGTKPTMDVVRDISTEVTLYSLEQYEEYPTLLEDHFGGSQRAAVAAAAAGCSTAFATGNSNAGINGWYLSQILHKEAHSRLGFYGYDLQDQCGASNSLSIRSDEGLIHELRGPNYPNYAMNVGHQPEYAGIAQAPHAARGDAFCTNPLIKVAFADKDLSFDFTSPRKSIAAGALREFMPEGERDLIIPAGK.

Position 150 (glutamine 150) interacts with coenzyme F430. Residues arginine 228, 259–260 (KH), and arginine 273 each bind coenzyme B. At histidine 260 the chain carries Pros-methylhistidine. Arginine 274 is subject to 5-methylarginine. Tyrosine 335 contacts coenzyme M. At glutamine 402 the chain carries 2-methylglutamine. Tyrosine 446 provides a ligand contact to coenzyme M. The residue at position 447 (glycine 447) is a 1-thioglycine. A (Z)-2,3-didehydroaspartate modification is found at aspartate 452. Position 454 is an S-methylcysteine (cysteine 454).

The protein belongs to the methyl-coenzyme M reductase alpha subunit family. In terms of assembly, MCR is a hexamer of two alpha, two beta, and two gamma chains, forming a dimer of heterotrimers. The cofactor is coenzyme F430. Post-translationally, the alpha subunit contains six modified amino acids near the active site region. Is methylated on His-260, Arg-274, Gln-402 and Cys-454, probably by the action of specific S-adenosylmethionine-dependent methyltransferases. Also contains a thioglycine at position 447, forming a thiopeptide bond. Contains a didehydroaspartate residue at position 452. The methylation on C5 of Arg-274 is a post-translational methylation not essential in vivo, but which plays a role for the stability and structural integrity of MCR.

The enzyme catalyses coenzyme B + methyl-coenzyme M = methane + coenzyme M-coenzyme B heterodisulfide. The protein operates within one-carbon metabolism; methyl-coenzyme M reduction; methane from methyl-coenzyme M: step 1/1. In terms of biological role, component of the methyl-coenzyme M reductase (MCR) I that catalyzes the reductive cleavage of methyl-coenzyme M (CoM-S-CH3 or 2-(methylthio)ethanesulfonate) using coenzyme B (CoB or 7-mercaptoheptanoylthreonine phosphate) as reductant which results in the production of methane and the mixed heterodisulfide of CoB and CoM (CoM-S-S-CoB). This is the final step in methanogenesis. This Methanothermobacter thermautotrophicus (strain ATCC 29096 / DSM 1053 / JCM 10044 / NBRC 100330 / Delta H) (Methanobacterium thermoautotrophicum) protein is Methyl-coenzyme M reductase II subunit alpha (mrtA).